A 180-amino-acid chain; its full sequence is E1B protein, small T-antigen (180 aa).

The interval 142-180 (GPAAPLARQGSQQEEQQQRQEEEQVQEEMRSGLDPPTEN) is disordered. Positions 157 to 172 (QQQRQEEEQVQEEMRS) are enriched in basic and acidic residues.

It belongs to the adenoviridae E1B 19 kDa protein family.

This Simian adenovirus serotype 7 (SAdV-7) protein is E1B protein, small T-antigen.